Here is a 1407-residue protein sequence, read N- to C-terminus: DNA-directed RNA polymerase subunit beta' (1407 aa).

Zn(2+) contacts are provided by Cys70, Cys72, Cys85, and Cys88. Positions 460, 462, and 464 each coordinate Mg(2+). Zn(2+) is bound by residues Cys814, Cys888, Cys895, and Cys898.

The protein belongs to the RNA polymerase beta' chain family. In terms of assembly, the RNAP catalytic core consists of 2 alpha, 1 beta, 1 beta' and 1 omega subunit. When a sigma factor is associated with the core the holoenzyme is formed, which can initiate transcription. The cofactor is Mg(2+). It depends on Zn(2+) as a cofactor.

It catalyses the reaction RNA(n) + a ribonucleoside 5'-triphosphate = RNA(n+1) + diphosphate. In terms of biological role, DNA-dependent RNA polymerase catalyzes the transcription of DNA into RNA using the four ribonucleoside triphosphates as substrates. In Salmonella paratyphi B (strain ATCC BAA-1250 / SPB7), this protein is DNA-directed RNA polymerase subunit beta'.